The chain runs to 121 residues: Cysteine-rich DPF motif domain-containing protein 1 (121 aa).

It belongs to the CDPF1 family.

The chain is Cysteine-rich DPF motif domain-containing protein 1 (CDPF1) from Bos taurus (Bovine).